The sequence spans 221 residues: GTP cyclohydrolase-2 (221 aa).

63-67 (RLHSE) provides a ligand contact to GTP. 3 residues coordinate Zn(2+): cysteine 68, cysteine 79, and cysteine 81. GTP-binding positions include glutamine 84, 107 to 109 (EGR), and threonine 129. Catalysis depends on aspartate 141, which acts as the Proton acceptor. Arginine 143 acts as the Nucleophile in catalysis. GTP-binding residues include serine 164 and lysine 169.

Belongs to the GTP cyclohydrolase II family. Zn(2+) is required as a cofactor.

The catalysed reaction is GTP + 4 H2O = 2,5-diamino-6-hydroxy-4-(5-phosphoribosylamino)-pyrimidine + formate + 2 phosphate + 3 H(+). It participates in cofactor biosynthesis; riboflavin biosynthesis; 5-amino-6-(D-ribitylamino)uracil from GTP: step 1/4. Functionally, catalyzes the conversion of GTP to 2,5-diamino-6-ribosylamino-4(3H)-pyrimidinone 5'-phosphate (DARP), formate and pyrophosphate. This is GTP cyclohydrolase-2 from Streptomyces coelicolor (strain ATCC BAA-471 / A3(2) / M145).